Reading from the N-terminus, the 359-residue chain is MAGCGEIDHSVNMLPTNRKANESCANPAPSLTVPECAICLQTCVHPVSLPCKHVFCYLCVKGASWLGKRCALCRQEIPEDFLDKPTLLSPEELKAASRGNGEYAWYYEGRNGWWQYDERTSRELEDAFSKGKKSTEMLIAGFLYVADLENMVQYRRNEHGRRRKIKRDIIDIPKKGVAGLRLDCEANTVNLARESSADGADSVSAQSGASSVQPLVSSLRPLTSVDGQLTSPATPSPDASTSLEDSFAHLQLSGDSIAERSHRGEGEEDHESPSSGRVPAPDTSVEETESDASSDSEDVSALVAQHSLTQQRLLVPNANQTVSDRSDRSGIDRSVAGGGTVNAGVRSRRPDGQCTVTEV.

Residues 36–74 (CAICLQTCVHPVSLPCKHVFCYLCVKGASWLGKRCALCR) form an RING-type zinc finger. Glycyl lysine isopeptide (Lys-Gly) (interchain with G-Cter in ubiquitin) cross-links involve residues Lys-84 and Lys-94. Residues 91 to 167 (EELKAASRGN…EHGRRRKIKR (77 aa)) enclose the WWE domain. Tyr-107, Arg-110, and Trp-114 together coordinate a glycoprotein. Lys-130 participates in a covalent cross-link: Glycyl lysine isopeptide (Lys-Gly) (interchain with G-Cter in ubiquitin). The a glycoprotein site is built by Tyr-144, Gln-153, Arg-163, and Lys-175. A Glycyl lysine isopeptide (Lys-Gly) (interchain with G-Cter in ubiquitin) cross-link involves residue Lys-175. A disordered region spans residues 259-359 (ERSHRGEGEE…PDGQCTVTEV (101 aa)). Residues 284–298 (SVEETESDASSDSED) are compositionally biased toward acidic residues. Phosphoserine is present on residues Ser-290 and Ser-294. The span at 306-322 (HSLTQQRLLVPNANQTV) shows a compositional bias: polar residues.

In terms of assembly, can form homooligomers. Interacts with PARsylated AXIN1, AXIN2, BLZF1, CASC3, H1-2, IPO7, LIG3, NCL, PARP1, XRCC1, XRCC5 and XRCC6. Interacts with DDB1, DHX15, IQGAP1, LRPPRC, PARP2, PRKDC, RUVBL2, TNKS1 and TNKS2. Binding often leads to interactor ubiquitination, in the presence of the appropriate E1 and E2 enzymes, and proteasomal degradation. In terms of processing, ubiquitinated; autoubiquitinated. Autoubiquitination is enhanced upon poly(ADP-ribose)-binding.

It localises to the cytoplasm. It is found in the cytosol. Its subcellular location is the nucleus. The catalysed reaction is S-ubiquitinyl-[E2 ubiquitin-conjugating enzyme]-L-cysteine + [acceptor protein]-L-lysine = [E2 ubiquitin-conjugating enzyme]-L-cysteine + N(6)-ubiquitinyl-[acceptor protein]-L-lysine.. The protein operates within protein modification; protein ubiquitination. In terms of biological role, E3 ubiquitin-protein ligase that specifically binds poly-ADP-ribosylated (PARsylated) proteins and mediates their ubiquitination and subsequent degradation. May regulate many important biological processes, such as cell survival and DNA damage response. Acts as an activator of the Wnt signaling pathway by mediating the ubiquitination of PARsylated AXIN1 and AXIN2, 2 key components of the beta-catenin destruction complex. Acts in cooperation with tankyrase proteins (TNKS and TNKS2), which mediate PARsylation of target proteins AXIN1, AXIN2, BLZF1, CASC3, TNKS and TNKS2. Recognizes and binds tankyrase-dependent PARsylated proteins via its WWE domain and mediates their ubiquitination, leading to their degradation. Different ubiquitin linkage types have been observed: TNKS2 undergoes ubiquitination at 'Lys-48' and 'Lys-63', while AXIN1 is only ubiquitinated at 'Lys-48'. May regulate TNKS and TNKS2 subcellular location, preventing aggregation at a centrosomal location. Neuroprotective protein. Protects the brain against N-methyl-D-aspartate (NMDA) receptor-mediated glutamate excitotoxicity and ischemia, by interfering with PAR-induced cell death, called parthanatos. Prevents nuclear translocation of AIFM1 in a PAR-binding dependent manner. Does not affect PARP1 activation. Protects against cell death induced by DNA damaging agents, such as N-methyl-N-nitro-N-nitrosoguanidine (MNNG) and rescues cells from G1 arrest. Promotes cell survival after gamma-irradiation. Facilitates DNA repair. The polypeptide is E3 ubiquitin-protein ligase RNF146 (RNF146) (Ailuropoda melanoleuca (Giant panda)).